The chain runs to 1032 residues: Error-prone DNA polymerase (1032 aa).

It belongs to the DNA polymerase type-C family. DnaE2 subfamily.

The protein resides in the cytoplasm. It catalyses the reaction DNA(n) + a 2'-deoxyribonucleoside 5'-triphosphate = DNA(n+1) + diphosphate. In terms of biological role, DNA polymerase involved in damage-induced mutagenesis and translesion synthesis (TLS). It is not the major replicative DNA polymerase. This is Error-prone DNA polymerase from Hahella chejuensis (strain KCTC 2396).